A 393-amino-acid polypeptide reads, in one-letter code: Flap endonuclease 1 (393 aa).

An N-domain region spans residues Met-1–Ala-108. Position 34 (Asp-34) interacts with Mg(2+). Arg-74 is a binding site for DNA. Mg(2+) is bound by residues Asp-90, Glu-162, Glu-164, Asp-183, and Asp-185. The interval Leu-126–His-257 is I-domain. DNA is bound at residue Glu-162. Residues Gly-235 and Asp-237 each coordinate DNA. Residue Asp-237 coordinates Mg(2+). The tract at residues Thr-340–Phe-348 is interaction with PCNA.

Belongs to the XPG/RAD2 endonuclease family. FEN1 subfamily. As to quaternary structure, interacts with PCNA. Three molecules of FEN1 bind to one PCNA trimer with each molecule binding to one PCNA monomer. PCNA stimulates the nuclease activity without altering cleavage specificity. The cofactor is Mg(2+). Phosphorylated. Phosphorylation upon DNA damage induces relocalization to the nuclear plasma.

The protein localises to the nucleus. The protein resides in the nucleolus. Its subcellular location is the nucleoplasm. It is found in the mitochondrion. Structure-specific nuclease with 5'-flap endonuclease and 5'-3' exonuclease activities involved in DNA replication and repair. During DNA replication, cleaves the 5'-overhanging flap structure that is generated by displacement synthesis when DNA polymerase encounters the 5'-end of a downstream Okazaki fragment. It enters the flap from the 5'-end and then tracks to cleave the flap base, leaving a nick for ligation. Also involved in the long patch base excision repair (LP-BER) pathway, by cleaving within the apurinic/apyrimidinic (AP) site-terminated flap. Acts as a genome stabilization factor that prevents flaps from equilibrating into structures that lead to duplications and deletions. Also possesses 5'-3' exonuclease activity on nicked or gapped double-stranded DNA, and exhibits RNase H activity. Also involved in replication and repair of rDNA and in repairing mitochondrial DNA. This Trypanosoma cruzi (strain CL Brener) protein is Flap endonuclease 1.